Reading from the N-terminus, the 509-residue chain is Scavenger receptor class B member 1 (509 aa).

The Cytoplasmic portion of the chain corresponds to 1-11 (MGVSSRARWVA). The helical transmembrane segment at 12–32 (LGLGVLGLLCAALGVIMILMV) threads the bilayer. The Extracellular segment spans residues 33–440 (PSLIKQQVLK…YTQLVLMPQV (408 aa)). N-linked (GlcNAc...) asparagine glycans are attached at residues N102, N108, N116, N173, N212, N227, N255, N310, N330, and N383. C251 and C384 are oxidised to a cystine. A helical transmembrane segment spans residues 441 to 461 (LHYAQYVLLGLGGLLLLVPII). Residues 462–509 (YQLRSQEKCFLFWSGSKKGSQDKEAMQAYSESLMSPAAKGTVLQEAKL) lie on the Cytoplasmic side of the membrane.

It belongs to the CD36 family. As to quaternary structure, the C-terminal region binds to PDZK1. In terms of processing, N-glycosylated. The six cysteines of the extracellular domain are all involved in intramolecular disulfide bonds.

The protein localises to the cell membrane. The protein resides in the membrane. It is found in the caveola. Functionally, receptor for different ligands such as phospholipids, cholesterol ester, lipoproteins, phosphatidylserine and apoptotic cells. Receptor for HDL, mediating selective uptake of cholesteryl ether and HDL-dependent cholesterol efflux. Also facilitates the flux of free and esterified cholesterol between the cell surface and apoB-containing lipoproteins and modified lipoproteins, although less efficiently than HDL. May be involved in the phagocytosis of apoptotic cells, via its phosphatidylserine binding activity. The sequence is that of Scavenger receptor class B member 1 (Scarb1) from Rattus norvegicus (Rat).